Here is a 163-residue protein sequence, read N- to C-terminus: Single-stranded DNA-binding protein 1 (163 aa).

The region spanning 1–104 (MINNVVLVGR…VVAESFQLLE (104 aa)) is the SSB domain. The disordered stretch occupies residues 106 to 163 (RATREGGSPNSYNNGGYNNAPSNNSYSASSQQTPNFSRDESPFGNSNPMDISDDDLPF). Residues 111–135 (GGSPNSYNNGGYNNAPSNNSYSASS) are compositionally biased toward low complexity. The short motif at 158–163 (DDDLPF) is the Important for interaction with partner proteins element.

Homotetramer.

Plays an important role in DNA replication, recombination and repair. Binds to ssDNA and to an array of partner proteins to recruit them to their sites of action during DNA metabolism. The chain is Single-stranded DNA-binding protein 1 (ssb1) from Streptococcus agalactiae serotype III (strain NEM316).